The chain runs to 506 residues: 5-OH-xanthotoxin synthase (506 aa).

Residues 3-23 (PVVIFLVLAFPIASVYLLFYH) form a helical membrane-spanning segment. Residues 365 to 370 (TGPLLI) are substrate specificity. C446 is a binding site for heme.

The protein belongs to the cytochrome P450 family. Heme is required as a cofactor.

It localises to the microsome membrane. The enzyme catalyses xanthotoxin + reduced [NADPH--hemoprotein reductase] + O2 = 5-hydroxyxanthotoxin + oxidized [NADPH--hemoprotein reductase] + H2O + 2 H(+). Its pathway is secondary metabolite biosynthesis. Functionally, involved in the biosynthesis of coumarins and furanocoumarins (FCs), natural products required for defense responses against attacks by predators with potential medical and agroindustrial usages such as anticoagulant, rodenticide and artificial vanilla substitutes. Catalyzes the conversion of xanthotoxin into 5-hydroxyxanthotoxin. The sequence is that of 5-OH-xanthotoxin synthase from Pastinaca sativa (Wild parsnip).